The sequence spans 218 residues: Small ribosomal subunit protein uS3 (218 aa).

Positions 40 to 109 (IRKIINTEYS…DVSINIREVK (70 aa)) constitute a KH type-2 domain.

The protein belongs to the universal ribosomal protein uS3 family. As to quaternary structure, part of the 30S ribosomal subunit. Forms a tight complex with proteins S10 and S14.

In terms of biological role, binds the lower part of the 30S subunit head. Binds mRNA in the 70S ribosome, positioning it for translation. This is Small ribosomal subunit protein uS3 from Orientia tsutsugamushi (strain Boryong) (Rickettsia tsutsugamushi).